We begin with the raw amino-acid sequence, 271 residues long: Phosphatidylglycerol--prolipoprotein diacylglyceryl transferase (271 aa).

7 helical membrane-spanning segments follow: residues 25-45 (WYGIMYVIALLLALLLAKFFV), 60-80 (YFIWVEIGVILGARLGYILIY), 103-123 (FVGIRGMSYHGAIIGFLIATL), 134-154 (WIFLDLVALSVPLAYVFGRIG), 181-201 (PSQLYEAFLEGIVVFIIVYLA), 209-229 (GELILVYAGAYSLARFICEFY), and 235-255 (GIGFVLWGMSMGQILSFIMFI). A 1,2-diacyl-sn-glycero-3-phospho-(1'-sn-glycerol) is bound at residue arginine 152.

This sequence belongs to the Lgt family.

Its subcellular location is the cell inner membrane. It carries out the reaction L-cysteinyl-[prolipoprotein] + a 1,2-diacyl-sn-glycero-3-phospho-(1'-sn-glycerol) = an S-1,2-diacyl-sn-glyceryl-L-cysteinyl-[prolipoprotein] + sn-glycerol 1-phosphate + H(+). Its pathway is protein modification; lipoprotein biosynthesis (diacylglyceryl transfer). In terms of biological role, catalyzes the transfer of the diacylglyceryl group from phosphatidylglycerol to the sulfhydryl group of the N-terminal cysteine of a prolipoprotein, the first step in the formation of mature lipoproteins. This chain is Phosphatidylglycerol--prolipoprotein diacylglyceryl transferase, found in Campylobacter jejuni subsp. jejuni serotype O:6 (strain 81116 / NCTC 11828).